The sequence spans 157 residues: 3-hydroxyacyl-[acyl-carrier-protein] dehydratase FabZ (157 aa).

His58 is an active-site residue.

Belongs to the thioester dehydratase family. FabZ subfamily.

It is found in the cytoplasm. It carries out the reaction a (3R)-hydroxyacyl-[ACP] = a (2E)-enoyl-[ACP] + H2O. Its function is as follows. Involved in unsaturated fatty acids biosynthesis. Catalyzes the dehydration of short chain beta-hydroxyacyl-ACPs and long chain saturated and unsaturated beta-hydroxyacyl-ACPs. In Brucella abortus biovar 1 (strain 9-941), this protein is 3-hydroxyacyl-[acyl-carrier-protein] dehydratase FabZ.